We begin with the raw amino-acid sequence, 133 residues long: Cytochrome c-type biogenesis protein CcmE (133 aa).

The Cytoplasmic segment spans residues 1–7 (MKRKHKR). A helical; Signal-anchor for type II membrane protein membrane pass occupies residues 8-28 (LLFIIVTFIIFGSSVVIVLNK). Topologically, residues 29-133 (LRSNISFFFT…NYKPGKYRAK (105 aa)) are periplasmic. Residues H121 and Y125 each coordinate heme.

The protein belongs to the CcmE/CycJ family.

It localises to the cell inner membrane. In terms of biological role, heme chaperone required for the biogenesis of c-type cytochromes. Transiently binds heme delivered by CcmC and transfers the heme to apo-cytochromes in a process facilitated by CcmF and CcmH. The protein is Cytochrome c-type biogenesis protein CcmE of Ehrlichia canis (strain Jake).